Consider the following 146-residue polypeptide: Acidic phospholipase A2 2 (146 aa).

Positions 1-21 (MTPAHLLILAAVCVSPLGASS) are cleaved as a signal peptide. A propeptide spanning residues 22–27 (SRPMPL) is cleaved from the precursor. Intrachain disulfides connect cysteine 38–cysteine 98, cysteine 53–cysteine 145, cysteine 55–cysteine 71, cysteine 70–cysteine 126, cysteine 77–cysteine 119, cysteine 87–cysteine 112, and cysteine 105–cysteine 117. Positions 54, 56, and 58 each coordinate Ca(2+). Histidine 74 is a catalytic residue. A Ca(2+)-binding site is contributed by aspartate 75. Aspartate 120 is an active-site residue.

It belongs to the phospholipase A2 family. Group I subfamily. D49 sub-subfamily. Ca(2+) serves as cofactor. Expressed by the venom gland.

The protein localises to the secreted. It carries out the reaction a 1,2-diacyl-sn-glycero-3-phosphocholine + H2O = a 1-acyl-sn-glycero-3-phosphocholine + a fatty acid + H(+). Functionally, PLA2 catalyzes the calcium-dependent hydrolysis of the 2-acyl groups in 3-sn-phosphoglycerides. This chain is Acidic phospholipase A2 2, found in Naja atra (Chinese cobra).